The chain runs to 163 residues: Putative 4-hydroxy-4-methyl-2-oxoglutarate aldolase (163 aa).

Substrate contacts are provided by residues 76-79 (GDML) and R98. D99 serves as a coordination point for a divalent metal cation.

It belongs to the class II aldolase/RraA-like family. Homotrimer. A divalent metal cation is required as a cofactor.

It carries out the reaction 4-hydroxy-4-methyl-2-oxoglutarate = 2 pyruvate. The enzyme catalyses oxaloacetate + H(+) = pyruvate + CO2. In terms of biological role, catalyzes the aldol cleavage of 4-hydroxy-4-methyl-2-oxoglutarate (HMG) into 2 molecules of pyruvate. Also contains a secondary oxaloacetate (OAA) decarboxylase activity due to the common pyruvate enolate transition state formed following C-C bond cleavage in the retro-aldol and decarboxylation reactions. The polypeptide is Putative 4-hydroxy-4-methyl-2-oxoglutarate aldolase (Pseudomonas fluorescens (strain ATCC BAA-477 / NRRL B-23932 / Pf-5)).